The primary structure comprises 566 residues: Tetratricopeptide repeat protein 34 (566 aa).

The segment at 1–29 is disordered; it reads MLQRSPRAGPSRAQGRREAAETGGPTTQE. 8 TPR repeats span residues 50–83, 178–211, 212–245, 306–339, 341–373, 424–457, 464–497, and 512–545; these read EASRLLAADALYRLGRLEETHKALLVALSRRPQA, SESLLARARCYGFLGQKKTAMFDFNTVLRAEPGN, VQALCGRALVHLALDQLQEAVDDIVSALKLGPGT, PHWHLLLADILMAQGSYEEAGTHLEKALHRAPTS, AARARLGLLQLKKGDVPGAARDLQSLAEVDAPD, ACHLRLRATCLAELQEFGRALRDLDHVLQEALGD, AEDFCRQGRLLLSLGDEAAAAGAFAQALKLAPSL, and ARMFLLRGQCCLEEQRHAEAWTAVESGLLVDPDH.

In Homo sapiens (Human), this protein is Tetratricopeptide repeat protein 34 (TTC34).